Reading from the N-terminus, the 498-residue chain is Glutathione hydrolase 6 (498 aa).

At 1–49 (MDATTGAVLYQKLQLWEPGMESEEEEEEEEIAEPLVLSLRRLQNTPGNK) the chain is on the cytoplasmic side. The helical; Signal-anchor for type II membrane protein transmembrane segment at 50-70 (VGGLPGAWTRLLAGLLLLAVS) threads the bilayer. Residues 71–498 (SSLALRQLQG…PSGCCPFQGY (428 aa)) lie on the Extracellular side of the membrane. 3 N-linked (GlcNAc...) asparagine glycosylation sites follow: Asn162, Asn167, and Asn376.

It belongs to the gamma-glutamyltransferase family. Heterodimer composed of the light and heavy chains. The active site is located in the light chain. In terms of processing, cleaved by autocatalysis into a large and a small subunit and the autocatalytic cleavage is essential to the functional activation of the enzyme.

The protein localises to the membrane. The enzyme catalyses an N-terminal (5-L-glutamyl)-[peptide] + an alpha-amino acid = 5-L-glutamyl amino acid + an N-terminal L-alpha-aminoacyl-[peptide]. The catalysed reaction is glutathione + H2O = L-cysteinylglycine + L-glutamate. It carries out the reaction an S-substituted glutathione + H2O = an S-substituted L-cysteinylglycine + L-glutamate. It participates in sulfur metabolism; glutathione metabolism. Hydrolyzes and transfers gamma-glutamyl moieties from glutathione and other gamma-glutamyl compounds to acceptors. This chain is Glutathione hydrolase 6, found in Rattus norvegicus (Rat).